The primary structure comprises 560 residues: Membrane protein insertase YidC (560 aa).

A helical transmembrane segment spans residues 1 to 21; that stretch reads MDIKRTILIAALAVVSYVMVL. Positions 42–66 are disordered; sequence VAPGLPDGVPAGNNGASADVPSANA. 5 consecutive transmembrane segments (helical) span residues 341–361, 367–387, 437–457, 468–488, and 515–535; these read LELTVDYGFLWFIAQPIFWLL, LLGNWGWSIIVLTMLIKGLFF, LGGCLPILVQMPVFLALYWVL, WILWITDLSIKDPFFILPIIM, and PIIFTFFFLWFPAGLVLYWVV.

The protein belongs to the OXA1/ALB3/YidC family. Type 1 subfamily. In terms of assembly, interacts with the Sec translocase complex via SecD. Specifically interacts with transmembrane segments of nascent integral membrane proteins during membrane integration.

It localises to the cell inner membrane. Required for the insertion and/or proper folding and/or complex formation of integral membrane proteins into the membrane. Involved in integration of membrane proteins that insert both dependently and independently of the Sec translocase complex, as well as at least some lipoproteins. Aids folding of multispanning membrane proteins. This chain is Membrane protein insertase YidC, found in Pseudomonas putida (strain ATCC 47054 / DSM 6125 / CFBP 8728 / NCIMB 11950 / KT2440).